A 146-amino-acid chain; its full sequence is Sordarin/hypoxysordarin biosynthesis cluster protein G (146 aa).

Its pathway is antibiotic biosynthesis. Part of the gene cluster that mediates the biosynthesis of sordarin and hypoxysordarin, glycoside antibiotics with a unique tetracyclic diterpene aglycone structure. First, the geranylgeranyl diphosphate synthase sdnC constructs GGDP from farnesyl diphosphate and isopentenyl diphosphate. The diterpene cyclase sdnA then catalyzes the cyclization of GGDP to afford cycloaraneosene. Cycloaraneosene is then hydroxylated four times by the putative cytochrome P450 monooxygenases sdnB, sdnE, sdnF and sdnH to give a hydroxylated cycloaraneosene derivative such as cycloaraneosene-8,9,13,19-tetraol. Although the order of the hydroxylations is unclear, at least C8, C9 and C13 of the cycloaraneosene skeleton are hydroxylated before the sordaricin formation. Dehydration of the 13-hydroxy group of the hydroxylated cycloaraneosene derivative might be catalyzed by an unassigned hypothetical protein such as sdnG and sdnP to construct the cyclopentadiene moiety. The FAD-dependent oxidoreductase sdnN is proposed to catalyze the oxidation at C9 of the hydroxylated cycloaraneosene derivative and also catalyze the Baeyer-Villiger oxidation to give the lactone intermediate. The presumed lactone intermediate would be hydrolyzed to give an acrolein moiety and a carboxylate moiety. Then, [4+2]cycloaddition would occur between the acrolein moiety and the cyclopentadiene moiety to give sordaricin. SdnN might also be involved in the [4+2]cycloaddition after the hypothesized oxidation to accommodate the oxidized product and prompt the [4+2]cycloaddition. GDP-6-deoxy-D-altrose may be biosynthesized from GDP-D-mannose by the putative GDP-mannose-4,6-dehydratase sdnI and the short-chain dehydrogenase sdnK. The glycosyltransferase sdnJ catalyzes the attachment of 6-deoxy-D-altrose onto the 19-hydroxy group of sordaricin to give 4'-O-demethylsordarin. The methyltransferase sdnD would complete the biosynthesis of sordarin. Sordarin can be further modified into hypoxysordarin. The unique acyl chain at the 3'-hydroxy group of hypoxysordarin would be constructed by an iterative type I PKS sdnO and the trans-acting polyketide methyltransferase sdnL. SdnL would be responsible for the introduction of an alpha-methyl group of the polyketide chain. Alternatively, the beta-lactamase-like protein sdnR might be responsible for the cleavage and transfer of the polyketide chain from the PKS sdnO to sordarin. Two putative cytochrome P450 monooxygenases, sdnQ and sdnT, might catalyze the epoxidations of the polyketide chain to complete the biosynthesis of hypoxysordarin. Transcriptional regulators sdnM and sdnS are presumably encoded for the transcriptional regulation of the expression of the sdn gene cluster. In Sordaria araneosa (Pleurage araneosa), this protein is Sordarin/hypoxysordarin biosynthesis cluster protein G.